We begin with the raw amino-acid sequence, 343 residues long: Phosphoribosylformylglycinamidine cyclo-ligase (343 aa).

It belongs to the AIR synthase family.

The protein localises to the cytoplasm. The enzyme catalyses 2-formamido-N(1)-(5-O-phospho-beta-D-ribosyl)acetamidine + ATP = 5-amino-1-(5-phospho-beta-D-ribosyl)imidazole + ADP + phosphate + H(+). It functions in the pathway purine metabolism; IMP biosynthesis via de novo pathway; 5-amino-1-(5-phospho-D-ribosyl)imidazole from N(2)-formyl-N(1)-(5-phospho-D-ribosyl)glycinamide: step 2/2. The sequence is that of Phosphoribosylformylglycinamidine cyclo-ligase from Carboxydothermus hydrogenoformans (strain ATCC BAA-161 / DSM 6008 / Z-2901).